The chain runs to 592 residues: Beta-xylosidase (592 aa).

A signal peptide spans 1–19; it reads MYLNACRALTLISVLSLLA. C20 carries N-palmitoyl cysteine lipidation. C20 is lipidated: S-diacylglycerol cysteine.

It belongs to the glycosyl hydrolase 43 family.

Its subcellular location is the cell outer membrane. Xylosidase involved in ulvan degradation. Ulvan is the main polysaccharide component of the Ulvales (green seaweed) cell wall. It is composed of disaccharide building blocks comprising 3-sulfated rhamnose (Rha3S) linked to D-glucuronic acid (GlcA), L-iduronic acid (IduA), or D-xylose (Xyl). Beta-xylosidase converts Xyl-Rha3S, a product of alpha-L-rhamnosidase acting on Rha-Xyl-Rha3S oligosaccharides, further to Xyl and Rha3S. The chain is Beta-xylosidase from Formosa agariphila (strain DSM 15362 / KCTC 12365 / LMG 23005 / KMM 3901 / M-2Alg 35-1).